A 231-amino-acid polypeptide reads, in one-letter code: NADH-ubiquinone oxidoreductase chain 4 (231 aa).

The next 6 membrane-spanning stretches (helical) occupy residues proline 1–isoleucine 21, leucine 34–leucine 54, serine 61–isoleucine 80, tryptophan 84–leucine 106, valine 118–leucine 138, and leucine 156–leucine 178.

This sequence belongs to the complex I subunit 4 family.

It localises to the mitochondrion membrane. It carries out the reaction a ubiquinone + NADH + 5 H(+)(in) = a ubiquinol + NAD(+) + 4 H(+)(out). In terms of biological role, core subunit of the mitochondrial membrane respiratory chain NADH dehydrogenase (Complex I) that is believed to belong to the minimal assembly required for catalysis. Complex I functions in the transfer of electrons from NADH to the respiratory chain. The immediate electron acceptor for the enzyme is believed to be ubiquinone. In Azemiops feae (Fea's viper), this protein is NADH-ubiquinone oxidoreductase chain 4 (MT-ND4).